Reading from the N-terminus, the 429-residue chain is Enolase (429 aa).

Glutamine 163 is a binding site for (2R)-2-phosphoglycerate. Glutamate 205 acts as the Proton donor in catalysis. Residues aspartate 242, glutamate 285, and aspartate 312 each contribute to the Mg(2+) site. 4 residues coordinate (2R)-2-phosphoglycerate: lysine 337, arginine 366, serine 367, and lysine 388. Catalysis depends on lysine 337, which acts as the Proton acceptor.

This sequence belongs to the enolase family. Mg(2+) serves as cofactor.

Its subcellular location is the cytoplasm. It localises to the secreted. The protein resides in the cell surface. It catalyses the reaction (2R)-2-phosphoglycerate = phosphoenolpyruvate + H2O. The protein operates within carbohydrate degradation; glycolysis; pyruvate from D-glyceraldehyde 3-phosphate: step 4/5. In terms of biological role, catalyzes the reversible conversion of 2-phosphoglycerate (2-PG) into phosphoenolpyruvate (PEP). It is essential for the degradation of carbohydrates via glycolysis. This Methylorubrum populi (strain ATCC BAA-705 / NCIMB 13946 / BJ001) (Methylobacterium populi) protein is Enolase.